Reading from the N-terminus, the 27-residue chain is Defensin-like protein 2 (27 aa).

The residue at position 1 (Gln1) is a Pyrrolidone carboxylic acid.

It belongs to the DEFL family. Forms oligomers in its native state.

Its function is as follows. Possesses some antifungal activity sensitive to inorganic cations and antibacterial activity against B.megaterium. The protein is Defensin-like protein 2 of Brassica campestris (Field mustard).